The primary structure comprises 1117 residues: DNA-directed RNA polymerase subunit beta (1117 aa).

The disordered stretch occupies residues 1094–1117; that stretch reads QLARRTPPRPTYESLSRESLDDDE. The span at 1108–1117 shows a compositional bias: basic and acidic residues; it reads LSRESLDDDE.

This sequence belongs to the RNA polymerase beta chain family. In cyanobacteria the RNAP catalytic core is composed of 2 alpha, 1 beta, 1 beta', 1 gamma and 1 omega subunit. When a sigma factor is associated with the core the holoenzyme is formed, which can initiate transcription.

The catalysed reaction is RNA(n) + a ribonucleoside 5'-triphosphate = RNA(n+1) + diphosphate. Its function is as follows. DNA-dependent RNA polymerase catalyzes the transcription of DNA into RNA using the four ribonucleoside triphosphates as substrates. This is DNA-directed RNA polymerase subunit beta from Trichormus variabilis (strain ATCC 29413 / PCC 7937) (Anabaena variabilis).